The chain runs to 544 residues: CRISPR-associated endodeoxyribonuclease Cas12f2 (544 aa).

Positions 1-195 are recognition domain (REC); sequence MNMSKTTISV…KPNERETRYV (195 aa). Positions 196 to 326 are wedge domain (WED); it reads HISKLESPSK…YLQYTYEAEV (131 aa). Residues 327 to 334 form a linker region; the sequence is EANKEYAG. Residues 335–485 are ruvC-I; that stretch reads CLGVDIGCSK…VYVKPDYTSQ (151 aa). Catalysis depends on residues D339 and E430. The segment at 486-520 is target nucleic acid-binding (TNB); that stretch reads TCSSCGADKEKTERPSQAIFRCLNPTCRYYQRDIN. Zn(2+)-binding residues include C487, C490, C507, and C512. The segment at 521–541 is ruvC-II; that stretch reads ADFNAAVNIAKKALNNTEVVT. The active site involves D522.

This sequence belongs to the CRISPR-associated endonuclease Cas12f family. In terms of assembly, an asymmetric homodimer. Guide RNA is probably required for dimerization. The cofactor is Mg(2+). Requires Zn(2+) as cofactor.

Its function is as follows. CRISPR (clustered regularly interspaced short palindromic repeat), is an adaptive immune system that provides protection against mobile genetic elements (viruses, transposable elements and conjugative plasmids). CRISPR clusters contain sequences complementary to antecedent mobile elements and target invading nucleic acids. CRISPR clusters are transcribed and processed into CRISPR RNA (crRNA), which requires a trans-encoded small RNA (tracrRNA), but not this protein (in vitro). Recognizes a short motif in the CRISPR repeat sequences (the 5' PAM or protospacer adjacent motif, TTAT in this organism) to help distinguish self versus nonself, as targets within the CRISPR locus do not have PAMs. Upon expression in E.coli of this protein, a mini CRISPR array and the probable tracrRNA, has dsDNA endonuclease activity. DNA cleavage is centered around positions 21 base pairs 3' of PAM. The mini system does not protect E.coli against transformation by foreign plasmids. The protein is CRISPR-associated endodeoxyribonuclease Cas12f2 of Micrarchaeota archaeon (strain CG1_02_47_40).